A 110-amino-acid chain; its full sequence is MLEKTTRMNYLFDFYQSLLTQKQRSYMSLYYLDDLSLGEIAEEFDVSRQAVYDNIKRTEAMLEEYEDKLVLLQKFQERQRLVAKLKQLLSEEEHVNEEMKQVVEAIEKLD.

The protein belongs to the UPF0122 family.

In terms of biological role, might take part in the signal recognition particle (SRP) pathway. This is inferred from the conservation of its genetic proximity to ftsY/ffh. May be a regulatory protein. In Bacillus mycoides (strain KBAB4) (Bacillus weihenstephanensis), this protein is UPF0122 protein BcerKBAB4_3669.